The sequence spans 196 residues: Signal peptidase complex catalytic subunit SEC11 (196 aa).

Residues Met-1–Gln-14 lie on the Cytoplasmic side of the membrane. Residues Thr-15 to Trp-33 form a helical; Signal-anchor for type II membrane protein membrane-spanning segment. Topologically, residues Lys-34–Glu-196 are lumenal. Residues Ser-53 and His-92 each act as charge relay system in the active site. Residues Val-101 to Asn-133 form a disordered region. The span at Ser-118 to Asn-133 shows a compositional bias: polar residues. Asn-134 carries N-linked (GlcNAc...) asparagine glycosylation. Asp-138 functions as the Charge relay system in the catalytic mechanism. The tract at residues Val-182 to Leu-193 is C-terminal short (CTS) helix.

Belongs to the peptidase S26B family. Component of the signal peptidase complex (SPC) composed of a catalytic subunit SEC11 and three accessory subunits SPC1, SPC2 and SPC3. The complex induces a local thinning of the ER membrane which is used to measure the length of the signal peptide (SP) h-region of protein substrates. This ensures the selectivity of the complex towards h-regions shorter than 18-20 amino acids. SPC associates with the translocon complex.

Its subcellular location is the endoplasmic reticulum membrane. The catalysed reaction is Cleavage of hydrophobic, N-terminal signal or leader sequences from secreted and periplasmic proteins.. Its function is as follows. Catalytic component of the signal peptidase complex (SPC) which catalyzes the cleavage of N-terminal signal sequences from nascent proteins as they are translocated into the lumen of the endoplasmic reticulum. Specifically cleaves N-terminal signal peptides that contain a hydrophobic alpha-helix (h-region) shorter than 18-20 amino acids. The polypeptide is Signal peptidase complex catalytic subunit SEC11 (SEC11) (Ajellomyces dermatitidis (strain ER-3 / ATCC MYA-2586) (Blastomyces dermatitidis)).